Consider the following 195-residue polypeptide: Ribonuclease HII (195 aa).

Residues serine 6 to asparagine 195 enclose the RNase H type-2 domain. A divalent metal cation contacts are provided by aspartate 12, glutamate 13, and aspartate 108.

It belongs to the RNase HII family. Requires Mn(2+) as cofactor. It depends on Mg(2+) as a cofactor.

It localises to the cytoplasm. The catalysed reaction is Endonucleolytic cleavage to 5'-phosphomonoester.. Functionally, endonuclease that specifically degrades the RNA of RNA-DNA hybrids. This is Ribonuclease HII from Prochlorococcus marinus (strain NATL1A).